Reading from the N-terminus, the 779-residue chain is Vezatin (779 aa).

2 consecutive transmembrane segments (helical) span residues 139–159 and 162–182; these read LATPNIWDLSMLFAFISLLVM and TWWIVSSWLVWGVILFVYLVI. The stretch at 430–462 forms a coiled coil; that stretch reads VRSLQLHLKALLNEVIILEDELEKLVCTKETQE. Disordered stretches follow at residues 618 to 719 and 757 to 779; these read PVDP…DSLQ and EQTFGGEEEEQIIEENKNEIEEK. Residues 625-634 show a composition bias toward polar residues; that stretch reads ISNSEPSMNS. The segment covering 638 to 649 has biased composition (basic and acidic residues); it reads KVSKNDTEEESN. Positions 706 to 719 are enriched in polar residues; sequence GLTTAPPTPRDSLQ. A compositionally biased stretch (basic and acidic residues) spans 770-779; sequence EENKNEIEEK.

The protein belongs to the vezatin family. As to quaternary structure, interacts with USH2A (via the cytoplasmic region); the interaction associates VEZT with the USH2 complex at the stereocilia base. Interacts with myosin MYO7A and the cadherin-catenins complex.

The protein localises to the cell membrane. It localises to the cell projection. Its subcellular location is the stereocilium membrane. The protein resides in the cell junction. It is found in the adherens junction. The protein localises to the nucleus. It localises to the cytoplasmic vesicle. Its subcellular location is the secretory vesicle. The protein resides in the acrosome. Plays a pivotal role in the establishment of adherens junctions and their maintenance in adult life. Required for morphogenesis of the preimplantation embryo, and for the implantation process. Functionally, (Microbial infection) In case of Listeria infection, promotes bacterial internalization by participating in myosin VIIa recruitment to the entry site. The sequence is that of Vezatin (VEZT) from Homo sapiens (Human).